Reading from the N-terminus, the 264-residue chain is ATP synthase subunit a (264 aa).

Helical transmembrane passes span 41–61 (ITNI…INLL), 99–119 (IYFP…LIGM), 129–149 (HFVL…ILGF), 156–176 (FFSL…LVLI), 194–214 (ANIL…YNIM), 217–237 (GIIF…FSGL), and 238–258 (ELGI…GYIK).

The protein belongs to the ATPase A chain family. F-type ATPases have 2 components, CF(1) - the catalytic core - and CF(0) - the membrane proton channel. CF(1) has five subunits: alpha(3), beta(3), gamma(1), delta(1), epsilon(1). CF(0) has three main subunits: a, b and c.

The protein resides in the mitochondrion inner membrane. In terms of biological role, mitochondrial membrane ATP synthase (F(1)F(0) ATP synthase or Complex V) produces ATP from ADP in the presence of a proton gradient across the membrane which is generated by electron transport complexes of the respiratory chain. F-type ATPases consist of two structural domains, F(1) - containing the extramembraneous catalytic core and F(0) - containing the membrane proton channel, linked together by a central stalk and a peripheral stalk. During catalysis, ATP synthesis in the catalytic domain of F(1) is coupled via a rotary mechanism of the central stalk subunits to proton translocation. Key component of the proton channel; it may play a direct role in the translocation of protons across the membrane. The polypeptide is ATP synthase subunit a (ATP6) (Podospora anserina (strain S / ATCC MYA-4624 / DSM 980 / FGSC 10383) (Pleurage anserina)).